The chain runs to 142 residues: Small heat shock protein IbpB (142 aa).

The 112-residue stretch at 26–137 (TAEHQAFPPY…APQRIAISDR (112 aa)) folds into the sHSP domain.

Belongs to the small heat shock protein (HSP20) family. As to quaternary structure, homodimer. Forms homomultimers of about 100-150 subunits at optimal growth temperatures. Conformation changes to oligomers at high temperatures or high ionic concentrations. The decrease in size of the multimers is accompanied by an increase in chaperone activity.

It is found in the cytoplasm. In terms of biological role, associates with aggregated proteins, together with IbpA, to stabilize and protect them from irreversible denaturation and extensive proteolysis during heat shock and oxidative stress. Aggregated proteins bound to the IbpAB complex are more efficiently refolded and reactivated by the ATP-dependent chaperone systems ClpB and DnaK/DnaJ/GrpE. Its activity is ATP-independent. The protein is Small heat shock protein IbpB of Enterobacter sp. (strain 638).